A 261-amino-acid chain; its full sequence is tRNA 5-carboxymethoxyuridine methyltransferase (261 aa).

S-adenosyl-L-methionine-binding positions include R26, 52-53 (GG), D73, 102-103 (AQ), and H119.

It belongs to the class I-like SAM-binding methyltransferase superfamily. CmoM family.

The catalysed reaction is 5-carboxymethoxyuridine(34) in tRNA + S-adenosyl-L-methionine = 5-methoxycarbonylmethoxyuridine(34) in tRNA + S-adenosyl-L-homocysteine. Its function is as follows. Catalyzes the methylation of 5-carboxymethoxyuridine (cmo5U) to form 5-methoxycarbonylmethoxyuridine (mcmo5U) at position 34 in tRNAs. Four tRNAs (tRNA(Ala1), tRNA(Ser1), tRNA(Pro3) and tRNA(Thr4)) are fully modified with mcmo5U in stationary-phase E.coli. Also present at low frequency in tRNA(Leu3) and tRNA(Val1). The sequence is that of tRNA 5-carboxymethoxyuridine methyltransferase from Escherichia coli (strain K12).